Reading from the N-terminus, the 343-residue chain is N-acetyl-gamma-glutamyl-phosphate reductase (343 aa).

C147 is an active-site residue.

This sequence belongs to the NAGSA dehydrogenase family. Type 1 subfamily.

The protein resides in the cytoplasm. The enzyme catalyses N-acetyl-L-glutamate 5-semialdehyde + phosphate + NADP(+) = N-acetyl-L-glutamyl 5-phosphate + NADPH + H(+). The protein operates within amino-acid biosynthesis; L-arginine biosynthesis; N(2)-acetyl-L-ornithine from L-glutamate: step 3/4. In terms of biological role, catalyzes the NADPH-dependent reduction of N-acetyl-5-glutamyl phosphate to yield N-acetyl-L-glutamate 5-semialdehyde. This Listeria monocytogenes serotype 4b (strain CLIP80459) protein is N-acetyl-gamma-glutamyl-phosphate reductase.